The primary structure comprises 549 residues: S-methyl thiourocanate hydratase (549 aa).

Positions 49, 173, 174, 175, 193, 198, 239, 240, 260, 270, and 318 each coordinate NAD(+).

It belongs to the urocanase family. S-methyl thiourocanate hydratase subfamily. The cofactor is NAD(+).

It catalyses the reaction S-methyl-(E)-thiourocanate + H2O = S-methyl-thiohydantoin-5-propanoate. In terms of biological role, hydratase involved in the catabolism of S-methyl ergothioneine. Catalyzes the 1,4-addition of H(2)O to S-methyl thiourocanate, leading to the formation of S-methyl-thiohydantoin-5-propanoate, the second step in S-methyl ergothioneine degradation. Cannot use urocanate or thiourocanate as substrate. The sequence is that of S-methyl thiourocanate hydratase from Variovorax sp. (strain JCM 16519 / RA8).